The chain runs to 428 residues: Spermidine/putrescine import ATP-binding protein PotA (428 aa).

The region spanning 6 to 238 (IEFKNVSKTY…PINHFVADFI (233 aa)) is the ABC transporter domain. ATP is bound at residue 40–47 (GASGSGKS).

Belongs to the ABC transporter superfamily. Spermidine/putrescine importer (TC 3.A.1.11.1) family. The complex is composed of two ATP-binding proteins (PotA), two transmembrane proteins (PotB and PotC) and a solute-binding protein (PotD).

The protein resides in the cell membrane. It catalyses the reaction ATP + H2O + polyamine-[polyamine-binding protein]Side 1 = ADP + phosphate + polyamineSide 2 + [polyamine-binding protein]Side 1.. Its function is as follows. Part of the ABC transporter complex PotABCD involved in spermidine/putrescine import. Responsible for energy coupling to the transport system. This is Spermidine/putrescine import ATP-binding protein PotA from Lactococcus lactis subsp. lactis (strain IL1403) (Streptococcus lactis).